The chain runs to 523 residues: Beta-glucosidase 31 (523 aa).

A signal peptide spans 1–22 (MTPARVVFICCVVLLAAAAAAA). A beta-D-glucoside is bound by residues Q49, H149, and 194–195 (NE). The Proton donor role is filled by E195. Residues C214 and C223 are joined by a disulfide bond. The N-linked (GlcNAc...) asparagine glycan is linked to N227. Positions 339 and 413 each coordinate a beta-D-glucoside. The active-site Nucleophile is E413. N-linked (GlcNAc...) asparagine glycosylation is present at N450. A beta-D-glucoside is bound by residues W460, 467-468 (EY), and F476.

It belongs to the glycosyl hydrolase 1 family.

The enzyme catalyses Hydrolysis of terminal, non-reducing beta-D-glucosyl residues with release of beta-D-glucose.. This chain is Beta-glucosidase 31 (BGLU31), found in Oryza sativa subsp. japonica (Rice).